Here is a 178-residue protein sequence, read N- to C-terminus: Large ribosomal subunit protein uL6 (178 aa).

The protein belongs to the universal ribosomal protein uL6 family. As to quaternary structure, part of the 50S ribosomal subunit.

Its function is as follows. This protein binds to the 23S rRNA, and is important in its secondary structure. It is located near the subunit interface in the base of the L7/L12 stalk, and near the tRNA binding site of the peptidyltransferase center. The protein is Large ribosomal subunit protein uL6 of Aliarcobacter butzleri (strain RM4018) (Arcobacter butzleri).